Reading from the N-terminus, the 130-residue chain is Albumin-1 B (130 aa).

The first 26 residues, 1-26 (MASVKLASLMVLFATLGMFLTKNVGA), serve as a signal peptide directing secretion. 3 disulfides stabilise this stretch: cysteine 29–cysteine 46, cysteine 33–cysteine 48, and cysteine 41–cysteine 58. Propeptides lie at residues 64–69 (VFLRTN) and 123–130 (LLKSVSTA).

In terms of processing, the C-terminal glycine may be removed from PA1b. In terms of tissue distribution, major component of both the cotyledons and embryonic axes of mature seeds.

PA1b binds to basic 7S globulin (BG) and stimulates its phosphorylation activity. Involved in the signal transduction system to regulate the growth and differentiation as a hormone peptide. Toxic to various insects through binding to a high affinity binding site in the insect gut. In Pisum sativum (Garden pea), this protein is Albumin-1 B.